A 933-amino-acid chain; its full sequence is Phospholipase D2 (933 aa).

Disordered stretches follow at residues 1–20 and 134–160; these read MAAT…SSQL and SPAP…RRTA. The PX domain occupies 65–195; that stretch reads VIAQVVGTER…TEFLEVSQLS (131 aa). Positions 203 to 311 constitute a PH domain; it reads KGLEGVIRKR…WAQEITELAQ (109 aa). PLD phosphodiesterase domains lie at 437–464 and 751–778; these read TLWA…AYGR and ELIY…NDRS. The interval 441–788 is catalytic; that stretch reads HHEKLLVVDQ…LLGKRDSELA (348 aa).

The protein belongs to the phospholipase D family. Interacts with PIP5K1B. Interacts with EGFR. Phosphorylated by FGR.

Its subcellular location is the cell membrane. It catalyses the reaction a 1,2-diacyl-sn-glycero-3-phosphocholine + H2O = a 1,2-diacyl-sn-glycero-3-phosphate + choline + H(+). The enzyme catalyses 1,2-dihexadecanoyl-sn-glycero-3-phosphocholine + H2O = 1,2-dihexadecanoyl-sn-glycero-3-phosphate + choline + H(+). Function as phospholipase selective for phosphatidylcholine. May have a role in signal-induced cytoskeletal regulation and/or endocytosis. The protein is Phospholipase D2 (PLD2) of Bos taurus (Bovine).